A 177-amino-acid chain; its full sequence is ATP synthase subunit delta (177 aa).

It belongs to the ATPase delta chain family. As to quaternary structure, F-type ATPases have 2 components, F(1) - the catalytic core - and F(0) - the membrane proton channel. F(1) has five subunits: alpha(3), beta(3), gamma(1), delta(1), epsilon(1). F(0) has three main subunits: a(1), b(2) and c(10-14). The alpha and beta chains form an alternating ring which encloses part of the gamma chain. F(1) is attached to F(0) by a central stalk formed by the gamma and epsilon chains, while a peripheral stalk is formed by the delta and b chains.

The protein localises to the cell inner membrane. Functionally, f(1)F(0) ATP synthase produces ATP from ADP in the presence of a proton or sodium gradient. F-type ATPases consist of two structural domains, F(1) containing the extramembraneous catalytic core and F(0) containing the membrane proton channel, linked together by a central stalk and a peripheral stalk. During catalysis, ATP synthesis in the catalytic domain of F(1) is coupled via a rotary mechanism of the central stalk subunits to proton translocation. Its function is as follows. This protein is part of the stalk that links CF(0) to CF(1). It either transmits conformational changes from CF(0) to CF(1) or is implicated in proton conduction. This Actinobacillus pleuropneumoniae serotype 7 (strain AP76) protein is ATP synthase subunit delta.